The chain runs to 293 residues: Protein phosphatase 1 regulatory subunit 3B (293 aa).

The 109-residue stretch at 129–237 (RQRIENDHVC…NNQGKNYRII (109 aa)) folds into the CBM21 domain.

Interacts with glycogen, PPP1CC catalytic subunit of PP1 and PYGL. Associates with glycogen particles. Forms complexes with debranching enzyme, glycogen phosphorylase, glycogen synthase and phosphorylase kinase which is necessary for its regulation of PP1 activity.

In terms of biological role, acts as a glycogen-targeting subunit for phosphatase PP1. Facilitates interaction of the PP1 with enzymes of the glycogen metabolism and regulates its activity. Suppresses the rate at which PP1 dephosphorylates (inactivates) glycogen phosphorylase and enhances the rate at which it activates glycogen synthase and therefore limits glycogen breakdown. In Danio rerio (Zebrafish), this protein is Protein phosphatase 1 regulatory subunit 3B (ppp1r3b).